Consider the following 438-residue polypeptide: Glutamyl-tRNA(Gln) amidotransferase subunit D (438 aa).

Positions 92-422 (PEVTIIGTGG…EEVRKMMLTN (331 aa)) constitute an Asparaginase/glutaminase domain. Active-site residues include T102, T178, D179, and K256.

The protein belongs to the asparaginase 1 family. GatD subfamily. As to quaternary structure, heterodimer of GatD and GatE.

It catalyses the reaction L-glutamyl-tRNA(Gln) + L-glutamine + ATP + H2O = L-glutaminyl-tRNA(Gln) + L-glutamate + ADP + phosphate + H(+). In terms of biological role, allows the formation of correctly charged Gln-tRNA(Gln) through the transamidation of misacylated Glu-tRNA(Gln) in organisms which lack glutaminyl-tRNA synthetase. The reaction takes place in the presence of glutamine and ATP through an activated gamma-phospho-Glu-tRNA(Gln). The GatDE system is specific for glutamate and does not act on aspartate. The protein is Glutamyl-tRNA(Gln) amidotransferase subunit D of Pyrococcus abyssi (strain GE5 / Orsay).